A 503-amino-acid polypeptide reads, in one-letter code: Podocalyxin (503 aa).

Residues Met1–Ser21 form the signal peptide. A disordered region spans residues Ser19 to Thr236. The segment covering His20–Thr50 has biased composition (polar residues). Residues His22–Ser404 lie on the Extracellular side of the membrane. Residues Asn25, Asn89, and Asn94 are each glycosylated (N-linked (GlcNAc...) asparagine). A compositionally biased stretch (low complexity) spans Ser61 to Ser91. The segment covering Thr107–Gly126 has biased composition (low complexity). Positions Asp131–Ser183 are enriched in polar residues. Residues Asn145, Asn154, Asn167, and Asn206 are each glycosylated (N-linked (GlcNAc...) asparagine). Residues Ser196–Thr208 show a composition bias toward low complexity. Over residues Ser222–Thr236 the composition is skewed to polar residues. Asn303 carries N-linked (GlcNAc...) asparagine glycosylation. Residues Leu405 to Tyr425 traverse the membrane as a helical segment. Over Gly426–Leu503 the chain is Cytoplasmic. The residue at position 463 (Thr463) is a Phosphothreonine. Ser482 is subject to Phosphoserine. Thr501 carries the post-translational modification Phosphothreonine.

This sequence belongs to the podocalyxin family. As to quaternary structure, monomer; when associated with the membrane raft. Oligomer; when integrated in the apical membrane. Found in a complex with EZR, PODXL and NHERF2. Associates with the actin cytoskeleton through complex formation with EZR and NHERF2. Interacts (via the C-terminal PDZ-binding motif DTHL) with NHERF1 (via the PDZ domains); interaction is not detected in glomerular epithelium cells, take place early in the secretory pathway and is necessary for its apical membrane sorting. Interacts (via the C-terminal PDZ-binding motif DTHL) with NHERF2 (via the PDZ 1 domain); interaction is detected in glomerular epithelium cells. Interacts with EZR. In terms of processing, N- and O-linked glycosylated. Sialoglycoprotein. As to expression, expressed in liver cells and hematopoietic cells (at protein level). Glomerular epithelium cell (podocyte).

It localises to the apical cell membrane. Its subcellular location is the cell projection. The protein resides in the microvillus. The protein localises to the membrane raft. It is found in the lamellipodium. It localises to the filopodium. Its subcellular location is the ruffle. The protein resides in the membrane. Its function is as follows. Involved in the regulation of both adhesion and cell morphology and cancer progression. Functions as an anti-adhesive molecule that maintains an open filtration pathway between neighboring foot processes in the podocyte by charge repulsion. Acts as a pro-adhesive molecule, enhancing the adherence of cells to immobilized ligands, increasing the rate of migration and cell-cell contacts in an integrin-dependent manner. Induces the formation of apical actin-dependent microvilli. Involved in the formation of a preapical plasma membrane subdomain to set up initial epithelial polarization and the apical lumen formation during renal tubulogenesis. Plays a role in cancer development and aggressiveness by inducing cell migration and invasion through its interaction with the actin-binding protein EZR. Affects EZR-dependent signaling events, leading to increased activities of the MAPK and PI3K pathways in cancer cells. This chain is Podocalyxin (Podxl), found in Mus musculus (Mouse).